The primary structure comprises 320 residues: tRNA-cytidine(32) 2-sulfurtransferase (320 aa).

The short motif at 54-59 is the PP-loop motif element; it reads SGGKDS. [4Fe-4S] cluster is bound by residues C129, C132, and C220.

This sequence belongs to the TtcA family. As to quaternary structure, homodimer. The cofactor is Mg(2+). [4Fe-4S] cluster is required as a cofactor.

It localises to the cytoplasm. The enzyme catalyses cytidine(32) in tRNA + S-sulfanyl-L-cysteinyl-[cysteine desulfurase] + AH2 + ATP = 2-thiocytidine(32) in tRNA + L-cysteinyl-[cysteine desulfurase] + A + AMP + diphosphate + H(+). It participates in tRNA modification. Its function is as follows. Catalyzes the ATP-dependent 2-thiolation of cytidine in position 32 of tRNA, to form 2-thiocytidine (s(2)C32). The sulfur atoms are provided by the cysteine/cysteine desulfurase (IscS) system. This chain is tRNA-cytidine(32) 2-sulfurtransferase, found in Bordetella parapertussis (strain 12822 / ATCC BAA-587 / NCTC 13253).